Here is a 459-residue protein sequence, read N- to C-terminus: Cysteine--tRNA ligase (459 aa).

Zn(2+) is bound at residue Cys28. Positions Val30 to His40 match the 'HIGH' region motif. Zn(2+) contacts are provided by Cys209, His234, and Glu238. The short motif at Lys266–Ser270 is the 'KMSKS' region element. Residue Lys269 coordinates ATP.

It belongs to the class-I aminoacyl-tRNA synthetase family. As to quaternary structure, monomer. The cofactor is Zn(2+).

Its subcellular location is the cytoplasm. The catalysed reaction is tRNA(Cys) + L-cysteine + ATP = L-cysteinyl-tRNA(Cys) + AMP + diphosphate. The chain is Cysteine--tRNA ligase from Actinobacillus pleuropneumoniae serotype 5b (strain L20).